We begin with the raw amino-acid sequence, 566 residues long: Oxygen-dependent choline dehydrogenase (566 aa).

Residue 7-36 (DYIICGAGSAGNVLATRLTEDPNVTVLLLE) coordinates FAD. The disordered stretch occupies residues 182–204 (YQQEGFGPMDRTVTPKGRRASTA). H474 functions as the Proton acceptor in the catalytic mechanism.

This sequence belongs to the GMC oxidoreductase family. FAD is required as a cofactor.

The catalysed reaction is choline + A = betaine aldehyde + AH2. The enzyme catalyses betaine aldehyde + NAD(+) + H2O = glycine betaine + NADH + 2 H(+). The protein operates within amine and polyamine biosynthesis; betaine biosynthesis via choline pathway; betaine aldehyde from choline (cytochrome c reductase route): step 1/1. Functionally, involved in the biosynthesis of the osmoprotectant glycine betaine. Catalyzes the oxidation of choline to betaine aldehyde and betaine aldehyde to glycine betaine at the same rate. In Burkholderia multivorans (strain ATCC 17616 / 249), this protein is Oxygen-dependent choline dehydrogenase.